A 138-amino-acid polypeptide reads, in one-letter code: Putative pre-16S rRNA nuclease (138 aa).

This sequence belongs to the YqgF nuclease family.

It is found in the cytoplasm. In terms of biological role, could be a nuclease involved in processing of the 5'-end of pre-16S rRNA. This chain is Putative pre-16S rRNA nuclease, found in Salmonella arizonae (strain ATCC BAA-731 / CDC346-86 / RSK2980).